The sequence spans 342 residues: Elongation factor Ts (342 aa).

Residues 79-82 (TDFV) are involved in Mg(2+) ion dislocation from EF-Tu.

This sequence belongs to the EF-Ts family.

Its subcellular location is the cytoplasm. Functionally, associates with the EF-Tu.GDP complex and induces the exchange of GDP to GTP. It remains bound to the aminoacyl-tRNA.EF-Tu.GTP complex up to the GTP hydrolysis stage on the ribosome. The sequence is that of Elongation factor Ts (tsf) from Lactococcus lactis subsp. lactis (strain IL1403) (Streptococcus lactis).